A 435-amino-acid polypeptide reads, in one-letter code: MPNSNRAQPERTMMQAEVRIERYADQGRCVAHIDGRVVFVRFALPDELVRVELDEPHDRDDRFWTGEVVEVLEPSEDRVTPAWPLAGPLAMGGGVGGADLVHVSLPGQLKWKAITVSEQMSRLGHIDVAVPIERMPGDKAAGGLNWRTRIEMIADDNGMPSMRRRGTHNRVAIDTMPLATRTLLDVAKREHVWEGGFEPGSQIRLSVPEPRGEIVDTAAADDNYAVLVDGELRAGSQLLTEQVTINGTTFDYQVDANGFWQVHRQAPIALGTHVINLVNGQLQSAADAVIWDLYSGSGLFTLPLATMTGERTRMLSVEGARVAVKNAQRNLRAMNLNDVDARAGDVSRTLDHVPAHLAKPNVVVLDPPRAGARAKVCRQIAAAGASSVVYIACDPTSLARDTATLIGEGYELKDIRAFDIYPMTHHVETVALFTR.

The S-adenosyl-L-methionine site is built by glutamine 261, tyrosine 294, glutamate 318, and aspartate 366. The active-site Nucleophile is cysteine 393.

This sequence belongs to the class I-like SAM-binding methyltransferase superfamily. RNA M5U methyltransferase family.

This is an uncharacterized protein from Bifidobacterium longum (strain NCC 2705).